A 55-amino-acid chain; its full sequence is ATP synthase F(0) complex subunit 8 (55 aa).

The chain crosses the membrane as a helical span at residues 4–24 (LNPAPWFAILVFSWLVFLTVI). The disordered stretch occupies residues 34-55 (TNEPTSQSTEKAKPEPWNWPWH).

Belongs to the ATPase protein 8 family. In terms of assembly, component of the ATP synthase complex composed at least of ATP5F1A/subunit alpha, ATP5F1B/subunit beta, ATP5MC1/subunit c (homooctomer), MT-ATP6/subunit a, MT-ATP8/subunit 8, ATP5ME/subunit e, ATP5MF/subunit f, ATP5MG/subunit g, ATP5MK/subunit k, ATP5MJ/subunit j, ATP5F1C/subunit gamma, ATP5F1D/subunit delta, ATP5F1E/subunit epsilon, ATP5PF/subunit F6, ATP5PB/subunit b, ATP5PD/subunit d, ATP5PO/subunit OSCP. ATP synthase complex consists of a soluble F(1) head domain (subunits alpha(3) and beta(3)) - the catalytic core - and a membrane F(0) domain - the membrane proton channel (subunits c, a, 8, e, f, g, k and j). These two domains are linked by a central stalk (subunits gamma, delta, and epsilon) rotating inside the F1 region and a stationary peripheral stalk (subunits F6, b, d, and OSCP).

The protein localises to the mitochondrion membrane. Its function is as follows. Subunit 8, of the mitochondrial membrane ATP synthase complex (F(1)F(0) ATP synthase or Complex V) that produces ATP from ADP in the presence of a proton gradient across the membrane which is generated by electron transport complexes of the respiratory chain. ATP synthase complex consist of a soluble F(1) head domain - the catalytic core - and a membrane F(1) domain - the membrane proton channel. These two domains are linked by a central stalk rotating inside the F(1) region and a stationary peripheral stalk. During catalysis, ATP synthesis in the catalytic domain of F(1) is coupled via a rotary mechanism of the central stalk subunits to proton translocation. In vivo, can only synthesize ATP although its ATP hydrolase activity can be activated artificially in vitro. Part of the complex F(0) domain. In Oncorhynchus mykiss (Rainbow trout), this protein is ATP synthase F(0) complex subunit 8.